Consider the following 396-residue polypeptide: MELDHMTTGGLHAYPAPRGGPAAKPNVILQIGKCRAEMLEHVRRTHRHLLTEVSKQVERELKGLHRSVGKLENNLDGYVPTGDSQRWKKSIKACLCRCQETIANLERWVKREMHVWREVFYRLERWADRLESMGGKYPVGSEPARHTVSVGVGGPEPYCQEADGYDYTVSPYAITPPPAAGELPEQESVGAQQYQSWVPGEDGQPSPGVDTQIFEDPREFLSHLEEYLRQVGGSEEYWLSQIQNHMNGPAKKWWEFKQGSVKNWVEFKKEFLQYSEGTLSREAIQRELDLPQKQGEPLDQFLWRKRDLYQTLYVDAEEEEIIQYVVGTLQPKFKRFLRHPLPKTLEQLIQRGMEVQDGLEQAAEPSVTPLPTEDETEALTPALTSESVASDRTQPE.

Residues serine 54–tyrosine 78 adopt a coiled-coil conformation. Residues lysine 89–glutamate 100 are interaction with SH3GL1 or SH3GL3. The tract at residues glutamine 195–phenylalanine 214 is interaction with DNM2. Residue serine 260 is modified to Phosphoserine. Residues lysine 268 and lysine 269 each participate in a glycyl lysine isopeptide (Lys-Gly) (interchain with G-Cter in ubiquitin) cross-link. At threonine 278 the chain carries Phosphothreonine. The interval glycine 358–glutamate 396 is disordered. A compositionally biased stretch (polar residues) spans alanine 382–glutamate 396.

It belongs to the ARC/ARG3.1 family. As to quaternary structure, homooligomer; homooligomerizes into virion-like capsids. Interacts with SH3GL1/endophilin-2, SH3GL3/endophilin-3 and DNM2/DYN2. Interacts with CAMK2B (in the kinase inactive state); leading to target ARC to inactive synapses. Interacts with PSEN1. Interacts with GRIN2A and GRIN2B; inhibiting homooligomerization. In terms of processing, palmitoylation anchors the protein into the membrane by allowing direct insertion into the hydrophobic core of the lipid bilayer. Ubiquitinated by UBE3A, leading to its degradation by the proteasome, thereby promoting AMPA receptors (AMPARs) expression at synapses. Ubiquitinated by RNF216 at Lys-268 and Lys-269 limiting ARC protein levels induced by synaptic activity and thus regulating ARC-dependent forms of synaptic plasticity. Post-translationally, phosphorylation at Ser-260 by CaMK2 prevents homooligomerization into virion-like capsids by disrupting an interaction surface essential for high-order oligomerization. Phosphorylation by CaMK2 inhibits synaptic activity. In terms of tissue distribution, expressed exclusively in certain parts of the brain including cortex and molecular layer of the hippocampus. Typically expressed at high level in a minority of neurons. Basal expression higher in cortex than in hippocampus, highest in visual cortex.

It localises to the extracellular vesicle membrane. Its subcellular location is the postsynaptic cell membrane. It is found in the synapse. The protein localises to the postsynaptic density. The protein resides in the early endosome membrane. It localises to the cell projection. Its subcellular location is the dendrite. It is found in the cytoplasm. The protein localises to the cytoskeleton. The protein resides in the cell cortex. It localises to the dendritic spine. Its subcellular location is the cytoplasmic vesicle. It is found in the secretory vesicle. The protein localises to the acrosome. The protein resides in the clathrin-coated vesicle membrane. Functionally, master regulator of synaptic plasticity that self-assembles into virion-like capsids that encapsulate RNAs and mediate intercellular RNA transfer in the nervous system. ARC protein is released from neurons in extracellular vesicles that mediate the transfer of ARC mRNA into new target cells, where ARC mRNA can undergo activity-dependent translation. ARC capsids are endocytosed and are able to transfer ARC mRNA into the cytoplasm of neurons. Acts as a key regulator of synaptic plasticity: required for protein synthesis-dependent forms of long-term potentiation (LTP) and depression (LTD) and for the formation of long-term memory. Regulates synaptic plasticity by promoting endocytosis of AMPA receptors (AMPARs) in response to synaptic activity: this endocytic pathway maintains levels of surface AMPARs in response to chronic changes in neuronal activity through synaptic scaling, thereby contributing to neuronal homeostasis. Acts as a postsynaptic mediator of activity-dependent synapse elimination in the developing cerebellum by mediating elimination of surplus climbing fiber synapses. Accumulates at weaker synapses, probably to prevent their undesired enhancement. This suggests that ARC-containing virion-like capsids may be required to eliminate synaptic material. Required to transduce experience into long-lasting changes in visual cortex plasticity and for long-term memory. Involved in postsynaptic trafficking and processing of amyloid-beta A4 (APP) via interaction with PSEN1. In addition to its role in synapses, also involved in the regulation of the immune system: specifically expressed in skin-migratory dendritic cells and regulates fast dendritic cell migration, thereby regulating T-cell activation. The protein is Activity-regulated cytoskeleton-associated protein of Rattus norvegicus (Rat).